The sequence spans 235 residues: RNA pyrophosphohydrolase (235 aa).

A Nudix hydrolase domain is found at Gly-6–Thr-149. Residues Gly-38–Gly-59 carry the Nudix box motif. The tract at residues Ala-184 to Thr-235 is disordered.

Belongs to the Nudix hydrolase family. RppH subfamily. It depends on a divalent metal cation as a cofactor.

Functionally, accelerates the degradation of transcripts by removing pyrophosphate from the 5'-end of triphosphorylated RNA, leading to a more labile monophosphorylated state that can stimulate subsequent ribonuclease cleavage. The sequence is that of RNA pyrophosphohydrolase from Polaromonas naphthalenivorans (strain CJ2).